Here is a 353-residue protein sequence, read N- to C-terminus: Homeobox protein Mohawk (353 aa).

A compositionally biased stretch (basic and acidic residues) spans 18–27; the sequence is RGTPDRERGS. A disordered region spans residues 18–50; the sequence is RGTPDRERGSRTFSGFLDNPHTGPEVGIPDGPP. The homeobox; TALE-type DNA-binding region spans 71-132; it reads VRHKRQALQD…NARRRLKNTV (62 aa). 2 disordered regions span residues 157-183 and 243-302; these read LSVS…EEGY and MGKT…PSKD.

This sequence belongs to the TALE/IRO homeobox family.

The protein localises to the nucleus. Its function is as follows. May act as a morphogenetic regulator of cell adhesion. Participates in the early events that lead to differentiation. The sequence is that of Homeobox protein Mohawk (Mkx) from Mus musculus (Mouse).